Here is a 2187-residue protein sequence, read N- to C-terminus: Nascent polypeptide-associated complex subunit alpha, muscle-specific form (2187 aa).

3 disordered regions span residues 1–20 (MPGEATETVPATEQELPQPQ), 32–73 (LKVA…STPF), and 172–196 (IPPLEPKTSTSQVPSQGTLNLKGTA). Residues 9–20 (VPATEQELPQPQ) are compositionally biased toward polar residues. Residues 178–192 (KTSTSQVPSQGTLNL) show a composition bias toward polar residues. Position 247 is an asymmetric dimethylarginine (R247). 5 disordered regions span residues 335–370 (DSGAAPSDDKGSSAVTNELCSPPGSSNVAGTSLSPK), 579–611 (NTVSQPLKRSVTDPAMAPRTAKNTAPSTTSPLV), 738–835 (PKGS…PKDT), 884–1847 (KETL…PVEK), and 1892–2053 (PEAV…KAMS). A compositionally biased stretch (polar residues) spans 347–369 (SAVTNELCSPPGSSNVAGTSLSP). Residue T590 is modified to Phosphothreonine. Composition is skewed to polar residues over residues 599–609 (AKNTAPSTTSP), 818–835 (VTPTSPKKTSATAVPKDT), and 887–905 (LATSIPKVTSPSPQKTPKS). S822 carries the phosphoserine modification. Residues 941–951 (PHVPPTSPPKS) are compositionally biased toward pro residues. The span at 976-998 (TPTYPKKSPKPAASKKTPATPSP) shows a compositional bias: low complexity. Positions 1106-1122 (TPQNATPNESLAASSQK) are enriched in polar residues. A phosphoserine mark is found at S1174 and S1177. Over residues 1174–1195 (SPLSPKKASKTAAPKEAPATPS) the composition is skewed to low complexity. T1364 bears the Phosphothreonine mark. 2 positions are modified to phosphoserine: S1368 and S1392. T1398 bears the Phosphothreonine mark. Phosphoserine is present on residues S1400 and S1423. The span at 1429–1440 (VTPSSKKLSQTV) shows a compositional bias: polar residues. The span at 1489–1504 (SPSSPKKAPKTAAPPS) shows a compositional bias: low complexity. S1492 carries the phosphoserine modification. Residues 1609 to 1631 (PVTTSLAQTAPPSLQKAPSTTIP) show a composition bias toward polar residues. Low complexity-rich tracts occupy residues 1636-1670 (AAPAVLPVSSKSPAAPAAASASLSPATAAPQTAPK) and 1714-1727 (SSPPKKASSSKRAS). A compositionally biased stretch (polar residues) spans 1762–1772 (ACSTGTTTPQA). 2 stretches are compositionally biased toward low complexity: residues 1806-1823 (KSPGANSNSASSPKCPDP) and 1892-1914 (PEAVSASVAPKPAPAASLTLAPS). A PXLXP motif is present at residues 1950-1954 (PPLIP). The span at 1973–1983 (APKPAGTPAPA) shows a compositional bias: pro residues. Positions 2001–2014 (SDSDESVPELEEQD) are enriched in acidic residues. Position 2015 is a phosphoserine; by ILK1 (S2015). Residues 2016–2029 (TQTATQQAQLAAAA) are compositionally biased toward low complexity. The tract at residues 2041-2052 (QSRSEKKARKAM) is required for DNA-binding. The NAC-A/B domain maps to 2042 to 2107 (SRSEKKARKA…AKIEDLSQQA (66 aa)). Residue S2104 is modified to Phosphoserine. N6-acetyllysine; alternate is present on K2114. Residue K2114 forms a Glycyl lysine isopeptide (Lys-Gly) (interchain with G-Cter in SUMO2); alternate linkage. T2131 is modified (phosphothreonine; by GSK3-beta). Residue T2133 is modified to Phosphothreonine. S2138, S2158, S2163, and S2175 each carry phosphoserine. The 38-residue stretch at 2148-2185 (VEVKDIELVMSQANVSRAKAVRALKNNSNDIVNAIMEL) folds into the UBA domain.

The protein belongs to the NAC-alpha family. In terms of assembly, interacts (via PXLXP motif) with the muscle-restricted histone methyltransferase SMYD1 (via MYND-type zinc finger). In terms of processing, phosphorylation of Ser-2015 by ILK during cell adhesion may promote nuclear localization. Phosphorylation of Thr-2131 by GSK3B may promote proteasome mediated degradation. As to expression, specifically expressed in heart and skeletal muscle: it is present in differentiated myotubes but not in myoblasts.

The protein resides in the cytoplasm. Its subcellular location is the nucleus. In terms of biological role, cardiac- and muscle-specific transcription factor. May act to regulate the expression of genes involved in the development of myotubes. Plays a critical role in ventricular cardiomyocyte expansion and regulates postnatal skeletal muscle growth and regeneration. Involved in the organized assembly of thick and thin filaments of myofibril sarcomeres. The chain is Nascent polypeptide-associated complex subunit alpha, muscle-specific form (Naca) from Mus musculus (Mouse).